Here is a 160-residue protein sequence, read N- to C-terminus: UPF0178 protein PSPA7_5991 (160 aa).

This sequence belongs to the UPF0178 family.

In Pseudomonas paraeruginosa (strain DSM 24068 / PA7) (Pseudomonas aeruginosa (strain PA7)), this protein is UPF0178 protein PSPA7_5991.